The sequence spans 446 residues: ATP synthase subunit b-delta (446 aa).

The ATP synthase subunit b stretch occupies residues Met1–Leu168. A helical membrane pass occupies residues Phe4–Pro24. The ATP synthase subunit delta stretch occupies residues Leu169–Asp446.

This sequence in the N-terminal section; belongs to the ATPase B chain family. The protein in the C-terminal section; belongs to the ATPase delta chain family. F-type ATPases have 2 components, F(1) - the catalytic core - and F(0) - the membrane proton channel. F(1) has five subunits: alpha(3), beta(3), gamma(1), delta(1), epsilon(1). F(0) has three main subunits: a(1), b(2) and c(10-14). The alpha and beta chains form an alternating ring which encloses part of the gamma chain. F(1) is attached to F(0) by a central stalk formed by the gamma and epsilon chains, while a peripheral stalk is formed by the delta and b chains.

The protein resides in the cell membrane. In terms of biological role, f(1)F(0) ATP synthase produces ATP from ADP in the presence of a proton or sodium gradient. F-type ATPases consist of two structural domains, F(1) containing the extramembraneous catalytic core and F(0) containing the membrane proton channel, linked together by a central stalk and a peripheral stalk. During catalysis, ATP synthesis in the catalytic domain of F(1) is coupled via a rotary mechanism of the central stalk subunits to proton translocation. Its function is as follows. This fusion protein includes a component of the F(0) channel (subunit b) and of the F(1) subunit (subunit delta). Two copies of subunit b and one of delta together form the peripheral 'stator' stalk which links F(1) to F(0). The chain is ATP synthase subunit b-delta (atpFH) from Mycobacterium bovis (strain ATCC BAA-935 / AF2122/97).